The sequence spans 987 residues: uncharacterized protein (987 aa).

Helical transmembrane passes span 12–32 (FIYLCILLFVFMASMLNSVSG) and 958–978 (VENNFEIFLILINVIFGLGIL).

This sequence to M.jannaschii MJ1393 and A.fulgidus AF2028.

It is found in the cell membrane. This is an uncharacterized protein from Methanocaldococcus jannaschii (strain ATCC 43067 / DSM 2661 / JAL-1 / JCM 10045 / NBRC 100440) (Methanococcus jannaschii).